Reading from the N-terminus, the 212-residue chain is Transcriptional regulator GfcR (212 aa).

This sequence belongs to the purine/pyrimidine phosphoribosyltransferase family. GfcR subfamily.

DNA-binding transcriptional regulator that functions as a regulator of central sugar catabolic pathways. The sequence is that of Transcriptional regulator GfcR from Halobacterium salinarum (strain ATCC 29341 / DSM 671 / R1).